A 144-amino-acid polypeptide reads, in one-letter code: Large ribosomal subunit protein uL15 (144 aa).

A disordered region spans residues 1 to 48; sequence MIKLESLQDPSPRKRRTKLLGRGPSSGHGKTSCRGHKGDGSRSGYKRR.

It belongs to the universal ribosomal protein uL15 family. In terms of assembly, part of the 50S ribosomal subunit.

Functionally, binds to the 23S rRNA. The protein is Large ribosomal subunit protein uL15 of Chlamydia abortus (strain DSM 27085 / S26/3) (Chlamydophila abortus).